A 1132-amino-acid chain; its full sequence is Protein sel-1 homolog 3 (1132 aa).

Positions 1–24 (MQRRGAGLGWPRQQQQQPPPLAVG) are disordered. Asparagine 201, asparagine 382, and asparagine 527 each carry an N-linked (GlcNAc...) asparagine glycan. Sel1-like repeat units follow at residues 575–609 (YLAVFYETGLNVPRDQLQGMLYSLVGGQGSERLSS), 611–647 (NLGYKHYQGIDNYPLDWELSYAYYSNIATKTPLDQHT), 694–730 (RLAQMLFWGQQGVAKNPEAAIEWYAKGALETEDPALI), 732–767 (DYAIVLFKGQGVKKNRRLALELMKKAASKGLHQAVN), 768–800 (GLGWYYHKFKKNYAKAAKYWLKAEEMGNPDASY), 801–839 (NLGVLHLDGIFPGVPGRNQTLAGEYFHKAAQGGHMEGTL), and 840–877 (WCSLYYITGNLETFPRDPEKAVVWAKHVAEKNGYLGHV). At serine 608 the chain carries Phosphoserine. A glycan (N-linked (GlcNAc...) asparagine) is linked at asparagine 937. A Sel1-like 8 repeat occupies 952-988 (KMGDLYYYGHQNQSQDLELSVQMYAQAALDGDSQGFF). A helical membrane pass occupies residues 1057 to 1077 (ILHSALIYFLGTFLLSILIAW). Residues 1087-1132 (ASDPPPRPSQASPDTATSTASPAVTPAADASDQDQPTVTNNPEPRG) are disordered. The segment covering 1097 to 1116 (ASPDTATSTASPAVTPAADA) has biased composition (low complexity). Polar residues predominate over residues 1119-1132 (QDQPTVTNNPEPRG).

The protein localises to the membrane. This Homo sapiens (Human) protein is Protein sel-1 homolog 3 (SEL1L3).